We begin with the raw amino-acid sequence, 127 residues long: Large ribosomal subunit protein bL12 (127 aa).

Residues 96–127 (GTPSTLKEAVSKDDAEEAAKQLKEAGAEVEVK) are disordered. Residues 104-127 (AVSKDDAEEAAKQLKEAGAEVEVK) show a composition bias toward basic and acidic residues.

This sequence belongs to the bacterial ribosomal protein bL12 family. In terms of assembly, homodimer. Part of the ribosomal stalk of the 50S ribosomal subunit. Forms a multimeric L10(L12)X complex, where L10 forms an elongated spine to which 2 to 4 L12 dimers bind in a sequential fashion. Binds GTP-bound translation factors.

In terms of biological role, forms part of the ribosomal stalk which helps the ribosome interact with GTP-bound translation factors. Is thus essential for accurate translation. This is Large ribosomal subunit protein bL12 from Oleidesulfovibrio alaskensis (strain ATCC BAA-1058 / DSM 17464 / G20) (Desulfovibrio alaskensis).